Consider the following 356-residue polypeptide: Probable arabinogalactan endo-beta-1,4-galactanase A (356 aa).

The first 21 residues, 1–21, serve as a signal peptide directing secretion; sequence MLGKTVLLPLLVLLCHSLASA. An N-linked (GlcNAc...) asparagine glycan is attached at Asn133. Glu157 acts as the Proton donor in catalysis. Glu268 serves as the catalytic Nucleophile.

Belongs to the glycosyl hydrolase 53 family.

It localises to the secreted. It catalyses the reaction The enzyme specifically hydrolyzes (1-&gt;4)-beta-D-galactosidic linkages in type I arabinogalactans.. Its function is as follows. Endogalactanase involved in the degradation of plant cell wall polysaccharides, and more particularly of hairy regions of pectin. The protein is Probable arabinogalactan endo-beta-1,4-galactanase A (galA) of Aspergillus fumigatus (strain CBS 144.89 / FGSC A1163 / CEA10) (Neosartorya fumigata).